We begin with the raw amino-acid sequence, 478 residues long: Dihydrolipoyl dehydrogenase (478 aa).

Residues 34 to 49 (EKYI…GGTC), K58, and G122 each bind FAD. An intrachain disulfide couples C49 to C54. NAD(+)-binding positions include 188–192 (GAGVI), E211, V245, and 276–279 (AVGR). FAD contacts are provided by D319 and A327. Residue H451 is the Proton acceptor of the active site.

Belongs to the class-I pyridine nucleotide-disulfide oxidoreductase family. Homodimer. The cofactor is FAD.

Its subcellular location is the cytoplasm. The enzyme catalyses N(6)-[(R)-dihydrolipoyl]-L-lysyl-[protein] + NAD(+) = N(6)-[(R)-lipoyl]-L-lysyl-[protein] + NADH + H(+). In terms of biological role, the branched-chain alpha-keto dehydrogenase complex catalyzes the overall conversion of alpha-keto acids to acyl-CoA and CO(2). It contains multiple copies of 3 enzymatic components: branched-chain alpha-keto acid decarboxylase (E1), lipoamide acyltransferase (E2) and lipoamide dehydrogenase (E3). This Pseudomonas fluorescens protein is Dihydrolipoyl dehydrogenase (lpd).